The sequence spans 161 residues: MAQTITSLADLKQGPGAEPAGLSAEPQEPKLDKEGRAYATGKRKDAVARVWIKPGSGKIIVNGRDLGVYFARPVLRMMINQPFSIVARVDQYDVMCTVSGGGLSGQAGALRHGISKALTYYEPALRPALKAAGLLTRDPRVVERKKYGRAKARRSFQFSKR.

Positions 1 to 38 are disordered; it reads MAQTITSLADLKQGPGAEPAGLSAEPQEPKLDKEGRAY. Over residues 27–38 the composition is skewed to basic and acidic residues; it reads QEPKLDKEGRAY.

The protein belongs to the universal ribosomal protein uS9 family.

The polypeptide is Small ribosomal subunit protein uS9 (Rhodospirillum centenum (strain ATCC 51521 / SW)).